The primary structure comprises 745 residues: AP-3 complex subunit beta (745 aa).

At S638 the chain carries Phosphoserine. Residues 674-745 (YASETSESSE…TEPEPNYWQS (72 aa)) form a disordered region. Residues 680 to 718 (ESSEGEYETSTSESEDEETDDTSQEEDNEKNSTPDEDTE) are compositionally biased toward acidic residues.

It belongs to the adaptor complexes large subunit family. Adaptor protein complex 3 (AP-3) is a heterotetramer composed of 2 large adaptins (apl5 and apl6), a medium adaptin (apm3) and a small adaptin (aps3).

It localises to the golgi apparatus. Its subcellular location is the cytoplasmic vesicle. It is found in the clathrin-coated vesicle membrane. Adaptins are components of the adaptor complexes which link clathrin to receptors in coated vesicles. Clathrin-associated protein complexes are believed to interact with the cytoplasmic tails of membrane proteins, leading to their selection and concentration. Beta adaptin is a subunit of the plasma membrane adaptor. The sequence is that of AP-3 complex subunit beta (apl6) from Schizosaccharomyces pombe (strain 972 / ATCC 24843) (Fission yeast).